The sequence spans 368 residues: DNA replication and repair protein RecF (368 aa).

30–37 lines the ATP pocket; sequence GNNAQGKT.

This sequence belongs to the RecF family.

The protein localises to the cytoplasm. The RecF protein is involved in DNA metabolism; it is required for DNA replication and normal SOS inducibility. RecF binds preferentially to single-stranded, linear DNA. It also seems to bind ATP. The protein is DNA replication and repair protein RecF of Streptococcus pyogenes serotype M4 (strain MGAS10750).